Here is a 479-residue protein sequence, read N- to C-terminus: Protein C-ets-2 (479 aa).

Residues 88-173 form the PNT domain; it reads DTFSGFTKEQ…EHLEQMIKDS (86 aa). A DNA-binding region (ETS) is located at residues 373 to 453; it reads IQLWQFLLEL…SGKRYVYRFV (81 aa).

It belongs to the ETS family.

Its subcellular location is the nucleus. Functionally, probable transcription factor. The chain is Protein C-ets-2 (ETS2) from Gallus gallus (Chicken).